The following is a 478-amino-acid chain: Proton-coupled amino acid transporter 2 (478 aa).

Composition is skewed to polar residues over residues 1 to 14 and 26 to 37; these read MSVT…QVAT and KLQSQDPSPANG. Residues 1-46 form a disordered region; it reads MSVTKSARSPQVATPLNLDLPESAKKLQSQDPSPANGSSSESSKKT. Topologically, residues 1–53 are cytoplasmic; the sequence is MSVTKSARSPQVATPLNLDLPESAKKLQSQDPSPANGSSSESSKKTKGITGFQ. Residues 54 to 74 form a helical membrane-spanning segment; the sequence is TLVHLVKGNMGTGILGLPLAV. Residues 75-76 lie on the Extracellular side of the membrane; the sequence is KN. The helical transmembrane segment at 77 to 97 threads the bilayer; sequence AGILMGPLSLLVMGLIACHCM. Topologically, residues 98-143 are cytoplasmic; sequence HILVRCAQRFCHRLNKPFMDYGDTVMHGLAFSPNAWLQNHAHWGRR. Residues 144–164 form a helical membrane-spanning segment; sequence VVSFFLIVTQLGFCCVYIVFL. Topologically, residues 165-192 are extracellular; sequence ADNLKQVVEAVNSTTISCHKNETVVLTP. Residues 193-213 traverse the membrane as a helical segment; it reads TMDSRLYMLSFLPVLGLLVFV. Topologically, residues 214 to 217 are cytoplasmic; the sequence is RNLR. Residues 218–238 form a helical membrane-spanning segment; that stretch reads VLTIFSLLANISMLVSLVIIA. Residues 239–259 are Extracellular-facing; sequence QYIIQEIPDASQLPLVASWKT. Residues 260 to 280 form a helical membrane-spanning segment; sequence YPLFFGTAIFSFESIGVVLPL. The Cytoplasmic segment spans residues 281 to 292; sequence ENKMKDARGFPT. The chain crosses the membrane as a helical span at residues 293-313; it reads ILSLGMSIITTLYIAIGALGY. The Extracellular segment spans residues 314–340; that stretch reads LRFGDDIKASITLNLPNCWLYQSVKLL. The helical transmembrane segment at 341–361 threads the bilayer; it reads YVVGILCTYALQFYVPAEIII. At 362 to 374 the chain is on the cytoplasmic side; it reads PLAVSQVSKRWAL. The helical transmembrane segment at 375 to 395 threads the bilayer; the sequence is PVDLSIRLALVCLTCMLAILI. The Extracellular portion of the chain corresponds to 396 to 399; that stretch reads PRLD. Residues 400–420 form a helical membrane-spanning segment; it reads LVLSLVGSVSSSALALIIPPL. Residues 421–441 are Cytoplasmic-facing; sequence LEVVTYYGEGISPLTVTKDAL. The helical transmembrane segment at 442-462 threads the bilayer; sequence ISILGFMGFVVGTYQALDELI. The Extracellular portion of the chain corresponds to 463–478; it reads KSGNSPALSNSTMFIQ.

This sequence belongs to the amino acid/polyamine transporter 2 family. As to expression, expressed in spinal cord, brain, testis, lung, heart, colon, spleen, kidney and muscle. Found in neuronal cell bodies in the anterior horn, in spinal cord brain stem, cerebellum, hippocampus, hypothalamus, rhinencephalon, cerebral cortex, and olfactory bulb in the brain. Also expressed in bone and fat tissues.

The protein localises to the cell membrane. Its subcellular location is the endoplasmic reticulum membrane. It localises to the recycling endosome membrane. It catalyses the reaction glycine(in) + H(+)(in) = glycine(out) + H(+)(out). It carries out the reaction L-alanine(in) + H(+)(in) = L-alanine(out) + H(+)(out). The catalysed reaction is D-alanine(in) + H(+)(in) = D-alanine(out) + H(+)(out). The enzyme catalyses L-proline(out) + H(+)(out) = L-proline(in) + H(+)(in). It catalyses the reaction D-proline(out) + H(+)(out) = D-proline(in) + H(+)(in). It carries out the reaction 4-hydroxy-L-proline(in) + H(+)(in) = 4-hydroxy-L-proline(out) + H(+)(out). The catalysed reaction is L-serine(in) + H(+)(in) = L-serine(out) + H(+)(out). The enzyme catalyses D-serine(out) + H(+)(out) = D-serine(in) + H(+)(in). It catalyses the reaction beta-alanine(in) + H(+)(in) = beta-alanine(out) + H(+)(out). It carries out the reaction 4-aminobutanoate(in) + H(+)(in) = 4-aminobutanoate(out) + H(+)(out). The catalysed reaction is sarcosine(in) + H(+)(in) = sarcosine(out) + H(+)(out). The enzyme catalyses N,N-dimethylglycine(in) + H(+)(in) = N,N-dimethylglycine(out) + H(+)(out). In terms of biological role, electrogenic proton/amino acid symporter with a high selectivity for the small side chains amino acids glycine, alanine and proline, where both L- and D-enantiomers are transported. Extension of the backbone length, as in beta-alanine and 4-aminobutanoate or methylation of the amino group, as in sarcosine and N,N-dimethylglycine, are also tolerated but decrease transport efficiency. A free carboxyl group is preferred. This is Proton-coupled amino acid transporter 2 from Mus musculus (Mouse).